A 605-amino-acid chain; its full sequence is Probable potassium transport system protein Kup (605 aa).

Helical transmembrane passes span 18-38 (GLVF…IIAL), 46-66 (ILGI…LEYA), 97-117 (MAFV…DGVI), 138-158 (GLSQ…LFVF), 169-189 (AFGP…AISV), 204-224 (AISF…EVIL), 247-267 (AWYF…AFII), 287-307 (FYIP…QALI), 339-359 (IYIG…MLVF), 368-388 (AYGF…TMIF), 395-415 (WKVP…VSNC), and 418-438 (LPHG…VILI).

This sequence belongs to the HAK/KUP transporter (TC 2.A.72) family.

Its subcellular location is the cell inner membrane. The enzyme catalyses K(+)(in) + H(+)(in) = K(+)(out) + H(+)(out). In terms of biological role, transport of potassium into the cell. Likely operates as a K(+):H(+) symporter. The polypeptide is Probable potassium transport system protein Kup (Pelobacter propionicus (strain DSM 2379 / NBRC 103807 / OttBd1)).